The primary structure comprises 73 residues: Translation initiation factor IF-1 (73 aa).

The 73-residue stretch at 1–73 folds into the S1-like domain; sequence MAKKDGVIEL…ARGRIVYRYK (73 aa).

The protein belongs to the IF-1 family. As to quaternary structure, component of the 30S ribosomal translation pre-initiation complex which assembles on the 30S ribosome in the order IF-2 and IF-3, IF-1 and N-formylmethionyl-tRNA(fMet); mRNA recruitment can occur at any time during PIC assembly.

It is found in the cytoplasm. One of the essential components for the initiation of protein synthesis. Stabilizes the binding of IF-2 and IF-3 on the 30S subunit to which N-formylmethionyl-tRNA(fMet) subsequently binds. Helps modulate mRNA selection, yielding the 30S pre-initiation complex (PIC). Upon addition of the 50S ribosomal subunit IF-1, IF-2 and IF-3 are released leaving the mature 70S translation initiation complex. The chain is Translation initiation factor IF-1 from Tropheryma whipplei (strain TW08/27) (Whipple's bacillus).